A 25-amino-acid chain; its full sequence is Caerin-1.17 (25 aa).

A Leucine amide modification is found at Leu-25.

This sequence belongs to the frog skin active peptide (FSAP) family. Caerin subfamily. As to expression, expressed by the skin dorsal glands.

It localises to the secreted. Its function is as follows. Caerin-1.17 shows significant activity against Gram-positive organisms, but is less effective against Gram-negative organisms. This Ranoidea gracilenta (Dainty green tree frog) protein is Caerin-1.17.